Reading from the N-terminus, the 330-residue chain is MVKSTPCITIDFMNMSQLTERTFTPSESLSSLSLFLSLARGQCRPGKFWHRRSFRQKFLLRSLIMPRLSVEWMNELSHWPNLNVLLTRQPRLPVRLHRPYLAANLSRKQLLEALRYHYALLRECMSAEEFSLYLNTPGLQLAKLEGKNGEQFTLELTMMISMDKEGDSTILFRNSEGIPLAEITFTLCEYQGKRTMFIGGLQGAKWEIPHQEIQNATKACHGLFPKRLVMEAACLFAQRLQVEQIIAVSNETHIYRSLRYRDKEGKIHADYNAFWESVGGVCDAERHYRLPAQIARKEIAEIASKKRAEYRRRYEMLDAIQPQMATMFRG.

The protein to H.influenzae HI_0461.

This is an uncharacterized protein from Escherichia coli (strain K12).